Consider the following 284-residue polypeptide: 2-dehydro-3-deoxyphosphooctonate aldolase (284 aa).

It belongs to the KdsA family.

The protein localises to the cytoplasm. It catalyses the reaction D-arabinose 5-phosphate + phosphoenolpyruvate + H2O = 3-deoxy-alpha-D-manno-2-octulosonate-8-phosphate + phosphate. Its pathway is carbohydrate biosynthesis; 3-deoxy-D-manno-octulosonate biosynthesis; 3-deoxy-D-manno-octulosonate from D-ribulose 5-phosphate: step 2/3. The protein operates within bacterial outer membrane biogenesis; lipopolysaccharide biosynthesis. The chain is 2-dehydro-3-deoxyphosphooctonate aldolase from Ralstonia pickettii (strain 12J).